The sequence spans 464 residues: ATP-dependent protease ATPase subunit HslU (464 aa).

ATP contacts are provided by residues isoleucine 19, 61 to 66 (GVGKTE), aspartate 277, glutamate 342, and arginine 414.

This sequence belongs to the ClpX chaperone family. HslU subfamily. As to quaternary structure, a double ring-shaped homohexamer of HslV is capped on each side by a ring-shaped HslU homohexamer. The assembly of the HslU/HslV complex is dependent on binding of ATP.

It localises to the cytoplasm. In terms of biological role, ATPase subunit of a proteasome-like degradation complex; this subunit has chaperone activity. The binding of ATP and its subsequent hydrolysis by HslU are essential for unfolding of protein substrates subsequently hydrolyzed by HslV. HslU recognizes the N-terminal part of its protein substrates and unfolds these before they are guided to HslV for hydrolysis. The chain is ATP-dependent protease ATPase subunit HslU from Lactobacillus gasseri (strain ATCC 33323 / DSM 20243 / BCRC 14619 / CIP 102991 / JCM 1131 / KCTC 3163 / NCIMB 11718 / NCTC 13722 / AM63).